A 425-amino-acid polypeptide reads, in one-letter code: UDP-N-acetylglucosamine 1-carboxyvinyltransferase (425 aa).

Residue 25 to 26 (KN) coordinates phosphoenolpyruvate. R95 is a binding site for UDP-N-acetyl-alpha-D-glucosamine. C119 serves as the catalytic Proton donor. Position 119 is a 2-(S-cysteinyl)pyruvic acid O-phosphothioketal (C119). Residues 124–128 (RPVDQ), D306, and I328 each bind UDP-N-acetyl-alpha-D-glucosamine.

Belongs to the EPSP synthase family. MurA subfamily.

It localises to the cytoplasm. It carries out the reaction phosphoenolpyruvate + UDP-N-acetyl-alpha-D-glucosamine = UDP-N-acetyl-3-O-(1-carboxyvinyl)-alpha-D-glucosamine + phosphate. The protein operates within cell wall biogenesis; peptidoglycan biosynthesis. Cell wall formation. Adds enolpyruvyl to UDP-N-acetylglucosamine. In Thermus thermophilus (strain ATCC 27634 / DSM 579 / HB8), this protein is UDP-N-acetylglucosamine 1-carboxyvinyltransferase.